A 150-amino-acid polypeptide reads, in one-letter code: Monothiol glutaredoxin-S13 (150 aa).

The interval 30 to 52 (PSSSSSSLSWLTSGSPKPTSISN) is disordered. The segment covering 31-44 (SSSSSSLSWLTSGS) has biased composition (low complexity). Residues 53 to 149 (KRSSNLVVME…PTLRQAGALW (97 aa)) form the Glutaredoxin domain. Residue Cys-73 participates in [2Fe-2S] cluster binding. Residues 147–150 (ALWL) carry the Responsive for interaction with TGA factors motif.

Belongs to the glutaredoxin family. CC-type subfamily.

The protein resides in the cytoplasm. It is found in the nucleus. Functionally, may only reduce GSH-thiol disulfides, but not protein disulfides. The chain is Monothiol glutaredoxin-S13 (GRXS13) from Arabidopsis thaliana (Mouse-ear cress).